The sequence spans 742 residues: Photosystem I P700 chlorophyll a apoprotein A2 (742 aa).

A run of 8 helical transmembrane segments spans residues leucine 46 to alanine 69, leucine 135 to glutamine 158, leucine 175 to isoleucine 199, isoleucine 273 to tyrosine 291, leucine 336 to glycine 359, serine 375 to valine 401, alanine 423 to histidine 445, and phenylalanine 525 to isoleucine 543. [4Fe-4S] cluster is bound by residues cysteine 567 and cysteine 576. 2 helical membrane passes run alanine 583–tryptophan 604 and leucine 651–isoleucine 673. 3 residues coordinate divinyl chlorophyll a: histidine 662, methionine 670, and tyrosine 678. Phylloquinone is bound at residue tryptophan 679. Residues leucine 715–alanine 735 traverse the membrane as a helical segment.

Belongs to the PsaA/PsaB family. In terms of assembly, the PsaA/B heterodimer binds the P700 divinyl chlorophyll special pair and subsequent electron acceptors. PSI consists of a core antenna complex that captures photons, and an electron transfer chain that converts photonic excitation into a charge separation. The cyanobacterial PSI reaction center is composed of one copy each of PsaA,B,C,D,E,F,I,J,K,L,M and X, and forms trimeric complexes. It depends on PSI electron transfer chain: 5 divinyl chlorophyll a, 1 divinyl chlorophyll a', 2 phylloquinones and 3 4Fe-4S clusters. PSI core antenna: 90 divinyl chlorophyll a, 22 carotenoids, 3 phospholipids and 1 galactolipid. P700 is a divinyl chlorophyll a/divinyl chlorophyll a' dimer, A0 is one or more divinyl chlorophyll a, A1 is one or both phylloquinones and FX is a shared 4Fe-4S iron-sulfur center. as a cofactor.

The protein localises to the cellular thylakoid membrane. It carries out the reaction reduced [plastocyanin] + hnu + oxidized [2Fe-2S]-[ferredoxin] = oxidized [plastocyanin] + reduced [2Fe-2S]-[ferredoxin]. PsaA and PsaB bind P700, the primary electron donor of photosystem I (PSI), as well as the electron acceptors A0, A1 and FX. PSI is a plastocyanin/cytochrome c6-ferredoxin oxidoreductase, converting photonic excitation into a charge separation, which transfers an electron from the donor P700 chlorophyll pair to the spectroscopically characterized acceptors A0, A1, FX, FA and FB in turn. Oxidized P700 is reduced on the lumenal side of the thylakoid membrane by plastocyanin or cytochrome c6. This chain is Photosystem I P700 chlorophyll a apoprotein A2, found in Prochlorococcus marinus (strain MIT 9301).